We begin with the raw amino-acid sequence, 382 residues long: Mannitol-1-phosphate 5-dehydrogenase (382 aa).

3 to 14 contacts NAD(+); it reads ALHFGAGNIGRG. N6-acetyllysine is present on Lys-269.

The protein belongs to the mannitol dehydrogenase family.

The catalysed reaction is D-mannitol 1-phosphate + NAD(+) = beta-D-fructose 6-phosphate + NADH + H(+). This is Mannitol-1-phosphate 5-dehydrogenase from Escherichia coli O9:H4 (strain HS).